We begin with the raw amino-acid sequence, 143 residues long: Large ribosomal subunit protein uL16 (143 aa).

This sequence belongs to the universal ribosomal protein uL16 family. As to quaternary structure, part of the 50S ribosomal subunit.

Binds 23S rRNA and is also seen to make contacts with the A and possibly P site tRNAs. This is Large ribosomal subunit protein uL16 from Sphingopyxis alaskensis (strain DSM 13593 / LMG 18877 / RB2256) (Sphingomonas alaskensis).